Here is a 382-residue protein sequence, read N- to C-terminus: Serine protease 23 (382 aa).

Residues 1–22 form the signal peptide; sequence MAGIPGLFILLVLLCVFMQVSP. A glycan (N-linked (GlcNAc...) asparagine) is linked at N92. Residues C159 and C175 are joined by a disulfide bond. The active-site Charge relay system is H174. N206 is a glycosylation site (N-linked (GlcNAc...) asparagine). Residues D239 and S315 each act as charge relay system in the active site.

The protein belongs to the peptidase S1 family.

Its subcellular location is the secreted. The chain is Serine protease 23 (Prss23) from Mus musculus (Mouse).